Consider the following 163-residue polypeptide: Phosphopantetheine adenylyltransferase (163 aa).

Position 9 (Ser-9) interacts with substrate. Residues 9–10 (SF) and His-17 each bind ATP. Substrate-binding residues include Lys-41, Val-78, and Arg-92. Residues 93 to 95 (GLR), Glu-103, and 128 to 134 (SRPITAT) contribute to the ATP site.

This sequence belongs to the bacterial CoaD family. As to quaternary structure, homohexamer. It depends on Mg(2+) as a cofactor.

The protein resides in the cytoplasm. The enzyme catalyses (R)-4'-phosphopantetheine + ATP + H(+) = 3'-dephospho-CoA + diphosphate. It functions in the pathway cofactor biosynthesis; coenzyme A biosynthesis; CoA from (R)-pantothenate: step 4/5. Its function is as follows. Reversibly transfers an adenylyl group from ATP to 4'-phosphopantetheine, yielding dephospho-CoA (dPCoA) and pyrophosphate. This Rhizobium meliloti (strain 1021) (Ensifer meliloti) protein is Phosphopantetheine adenylyltransferase.